Reading from the N-terminus, the 89-residue chain is Elongation factor 1-beta (89 aa).

The protein belongs to the EF-1-beta/EF-1-delta family.

In terms of biological role, promotes the exchange of GDP for GTP in EF-1-alpha/GDP, thus allowing the regeneration of EF-1-alpha/GTP that could then be used to form the ternary complex EF-1-alpha/GTP/AAtRNA. The protein is Elongation factor 1-beta of Methanococcus maripaludis (strain C5 / ATCC BAA-1333).